The chain runs to 315 residues: Putative steroid dehydrogenase 2 (315 aa).

Residue 47–76 (ASWAVVTGATDGIGKSYSFELARRGFNVYI) participates in NADP(+) binding. Residue Tyr-202 is part of the active site.

This sequence belongs to the short-chain dehydrogenases/reductases (SDR) family. 17-beta-HSD 3 subfamily.

This Caenorhabditis elegans protein is Putative steroid dehydrogenase 2 (stdh-2).